We begin with the raw amino-acid sequence, 415 residues long: Gamma-glutamyl phosphate reductase (415 aa).

Belongs to the gamma-glutamyl phosphate reductase family.

Its subcellular location is the cytoplasm. The catalysed reaction is L-glutamate 5-semialdehyde + phosphate + NADP(+) = L-glutamyl 5-phosphate + NADPH + H(+). The protein operates within amino-acid biosynthesis; L-proline biosynthesis; L-glutamate 5-semialdehyde from L-glutamate: step 2/2. Catalyzes the NADPH-dependent reduction of L-glutamate 5-phosphate into L-glutamate 5-semialdehyde and phosphate. The product spontaneously undergoes cyclization to form 1-pyrroline-5-carboxylate. The sequence is that of Gamma-glutamyl phosphate reductase from Bacillus cereus (strain B4264).